The sequence spans 21 residues: Bradykinin-potentiating peptide K12 (21 aa).

The tract at residues 1 to 21 (LRDYANRVINGGPVEAAGPPA) is disordered.

Expressed by the venom gland.

The protein resides in the secreted. In terms of biological role, inhibits angiotensin-converting enzyme (ACE), but does not serve as substrate for the enzyme. Potentiate bradykinin (BK) on the isolated guinea pig ileum as well as the isolated rat uterus for contraction. Also potentiates in vivo the depressor effect of BK on arterial blood pressure in the normotensive anesthetized rat. Intracerebroventricular injection into mice does not show toxic activity. The polypeptide is Bradykinin-potentiating peptide K12 (Buthus occitanus (Common European scorpion)).